The following is a 569-amino-acid chain: Sulfite reductase [NADPH] hemoprotein beta-component (569 aa).

[4Fe-4S] cluster contacts are provided by Cys-433, Cys-439, Cys-478, and Cys-482. A siroheme-binding site is contributed by Cys-482.

It belongs to the nitrite and sulfite reductase 4Fe-4S domain family. In terms of assembly, alpha(8)-beta(8). The alpha component is a flavoprotein, the beta component is a hemoprotein. Siroheme serves as cofactor. [4Fe-4S] cluster is required as a cofactor.

It catalyses the reaction hydrogen sulfide + 3 NADP(+) + 3 H2O = sulfite + 3 NADPH + 4 H(+). Its pathway is sulfur metabolism; hydrogen sulfide biosynthesis; hydrogen sulfide from sulfite (NADPH route): step 1/1. Functionally, component of the sulfite reductase complex that catalyzes the 6-electron reduction of sulfite to sulfide. This is one of several activities required for the biosynthesis of L-cysteine from sulfate. The polypeptide is Sulfite reductase [NADPH] hemoprotein beta-component (Buchnera aphidicola subsp. Acyrthosiphon pisum (strain Tuc7)).